Here is a 229-residue protein sequence, read N- to C-terminus: MSVLVITGTDTGVGKTVATAALACAARVAGIDVAVCKPVQTGTGPVGGTGDDDLVEIGRLAGVDALHPGWRYPDPLAPVAAAERAGAALPTRDELIGMVRAADAPGRLTLVEGAGGLLVELGQDAVTLRDVATELDAPVLVVVAPGLGTLNHTALTLESLAAQHVPCAGLVIGAWPAQPGAAEIDNRDTLARLAPVRAALPAGVGSVSPVDFERISATAFDPNWLAGLL.

12-17 (GVGKTV) is a binding site for ATP. Position 16 (threonine 16) interacts with Mg(2+). The active site involves lysine 37. Threonine 41 is a substrate binding site. Residues aspartate 53, 112–115 (EGAG), and 201–203 (PAG) each bind ATP. Mg(2+)-binding residues include aspartate 53 and glutamate 112.

The protein belongs to the dethiobiotin synthetase family. In terms of assembly, homodimer. Mg(2+) is required as a cofactor.

The protein resides in the cytoplasm. The catalysed reaction is (7R,8S)-7,8-diammoniononanoate + CO2 + ATP = (4R,5S)-dethiobiotin + ADP + phosphate + 3 H(+). The protein operates within cofactor biosynthesis; biotin biosynthesis; biotin from 7,8-diaminononanoate: step 1/2. In terms of biological role, catalyzes a mechanistically unusual reaction, the ATP-dependent insertion of CO2 between the N7 and N8 nitrogen atoms of 7,8-diaminopelargonic acid (DAPA, also called 7,8-diammoniononanoate) to form a ureido ring. This is ATP-dependent dethiobiotin synthetase BioD from Mycobacterium sp. (strain KMS).